The sequence spans 352 residues: C5a anaphylatoxin chemotactic receptor 1 (352 aa).

A compositionally biased stretch (polar residues) spans 1 to 11 (MDPISNDSSEI). The tract at residues 1–20 (MDPISNDSSEITYDYSDGTP) is disordered. Residues 1 to 38 (MDPISNDSSEITYDYSDGTPNPDMPADGVYIPKMEPGD) are Extracellular-facing. Asn-6 is a glycosylation site (N-linked (GlcNAc...) asparagine). Sulfotyrosine is present on residues Tyr-13 and Tyr-15. The helical transmembrane segment at 39 to 65 (IAALIIYLAVFLVGVTGNALVVWVTAF) threads the bilayer. The Cytoplasmic segment spans residues 66–70 (EAKRT). A helical membrane pass occupies residues 71-94 (VNAIWFLNLAVADLLSCLALPILF). At 95–111 (TSIVKHNHWPFGDQACI) the chain is on the extracellular side. Cys-110 and Cys-189 are joined by a disulfide. A helical transmembrane segment spans residues 112–133 (VLPSLILLNMYSSILLLATISA). Topologically, residues 134–154 (DRFLLVFKPIWCQKFRRPGLA) are cytoplasmic. The helical transmembrane segment at 155-175 (WMACGVTWVLALLLTIPSFVF) threads the bilayer. The Extracellular portion of the chain corresponds to 176–202 (RRIHKDPYSDSILCNIDYSKGPFFIEK). Residues 203 to 228 (AIAILRLMVGFVLPLLTLNICYTFLL) form a helical membrane-spanning segment. The Cytoplasmic portion of the chain corresponds to 229–244 (IRTWSRKATRSTKTLK). A helical transmembrane segment spans residues 245–267 (VVMAVVTCFFVFWLPYQVTGVIL). Over 268–284 (AWLPRSSSTFQSVERLN) the chain is Extracellular. The chain crosses the membrane as a helical span at residues 285–305 (SLCVSLAYINCCVNPIIYVMA). Residues 306-352 (GQGFHGRLRRSLPSIIRNVLSEDSLGRDSKSFTRSTMDTSTQKSQAV) lie on the Cytoplasmic side of the membrane. A phosphoserine mark is found at Ser-316, Ser-319, Ser-326, Ser-329, Ser-334, Ser-336, and Ser-340. Residues 332-352 (RDSKSFTRSTMDTSTQKSQAV) form a disordered region. Positions 337 to 352 (FTRSTMDTSTQKSQAV) are enriched in polar residues.

Belongs to the G-protein coupled receptor 1 family. Homodimer. May also form higher-order oligomers. Interacts (when phosphorylated) with ARRB1 and ARRB2; the interaction is associated with internalization of C5aR. Post-translationally, sulfation plays a critical role in the association of C5aR with C5a, but no significant role in the ability of the receptor to transduce a signal and mobilize calcium in response to a small peptide agonist. In terms of processing, phosphorylated on serine residues in response to C5a binding, resulting in internalization of the receptor and short-term desensitization to the ligand.

The protein resides in the cell membrane. It is found in the cytoplasmic vesicle. Functionally, receptor for the chemotactic and inflammatory peptide anaphylatoxin C5a. The ligand interacts with at least two sites on the receptor: a high-affinity site on the extracellular N-terminus, and a second site in the transmembrane region which activates downstream signaling events. Receptor activation stimulates chemotaxis, granule enzyme release, intracellular calcium release and superoxide anion production. The protein is C5a anaphylatoxin chemotactic receptor 1 (C5ar1) of Rattus norvegicus (Rat).